Here is a 1065-residue protein sequence, read N- to C-terminus: DNA-directed RNA polymerase subunit beta (1065 aa).

Belongs to the RNA polymerase beta chain family. In plastids the minimal PEP RNA polymerase catalytic core is composed of four subunits: alpha, beta, beta', and beta''. When a (nuclear-encoded) sigma factor is associated with the core the holoenzyme is formed, which can initiate transcription.

The protein localises to the plastid. The protein resides in the chloroplast. The enzyme catalyses RNA(n) + a ribonucleoside 5'-triphosphate = RNA(n+1) + diphosphate. In terms of biological role, DNA-dependent RNA polymerase catalyzes the transcription of DNA into RNA using the four ribonucleoside triphosphates as substrates. This is DNA-directed RNA polymerase subunit beta from Marchantia polymorpha (Common liverwort).